A 1623-amino-acid polypeptide reads, in one-letter code: RING finger protein 17 (1623 aa).

The tract at residues 1-22 (MAAEASKTGPSRSSYQRMGRKS) is disordered. The segment at 32 to 75 (CTRCGRRVSRSSGHHCELQCGHAFCELCLLMTEECTTIICPDCE) adopts an RING-type zinc-finger fold. Position 234 is an N6-acetyllysine (lysine 234). Tudor domains lie at 726-784 (CPVQ…FLNA), 962-1021 (KWEN…LKTM), and 1228-1285 (FWKK…PDIP). The segment at 1438–1462 (NQSNQHSDTDDSGVSGESESESLDE) is disordered. A Tudor 4 domain is found at 1479–1539 (DFRTEMPCLA…CQIPSHLMRY (61 aa)).

Interacts with MXD1, MXD3, MXD4, MXI1 and PIWIL1. Self-associates. As to expression, testis specific.

The protein resides in the cytoplasm. It localises to the nucleus. Seems to be involved in regulation of transcriptional activity of MYC. In vitro, inhibits DNA-binding activity of Mad-MAX heterodimers. Can recruit Mad transcriptional repressors (MXD1, MXD3, MXD4 and MXI1) to the cytoplasm. May be involved in spermiogenesis. This is RING finger protein 17 (RNF17) from Homo sapiens (Human).